Consider the following 374-residue polypeptide: UPF0754 membrane protein SAS1767 (374 aa).

2 helical membrane-spanning segments follow: residues 4–24 and 354–374; these read LFII…TNVI and SLGF…AIFV.

The protein belongs to the UPF0754 family.

Its subcellular location is the cell membrane. In Staphylococcus aureus (strain MSSA476), this protein is UPF0754 membrane protein SAS1767.